Reading from the N-terminus, the 647-residue chain is ATP-binding protein Uup (647 aa).

ABC transporter domains lie at 1–253 and 320–546; these read MALI…RVEA and FEME…AKAK. ATP contacts are provided by residues 36-43 and 352-359; these read GRNGAGKS and GPNGCGKT. The span at 545 to 563 shows a compositional bias: basic and acidic residues; sequence AKKSEPLKEESAVKNDRTS. The segment at 545 to 569 is disordered; sequence AKKSEPLKEESAVKNDRTSKPKSVK. Positions 559–647 are C-terminal domain (CTD), binds DNA; sequence NDRTSKPKSV…EKKNLVEGKA (89 aa).

Belongs to the ABC transporter superfamily. ABCF family. Uup subfamily.

It localises to the cytoplasm. It catalyses the reaction ATP + H2O = ADP + phosphate + H(+). In terms of biological role, probably plays a role in ribosome assembly or function. May be involved in resolution of branched DNA intermediates that result from template switching in postreplication gaps. Binds DNA and has ATPase activity. The protein is ATP-binding protein Uup of Haemophilus influenzae (strain ATCC 51907 / DSM 11121 / KW20 / Rd).